Reading from the N-terminus, the 621-residue chain is Glutathione-regulated potassium-efflux system protein KefC (621 aa).

A run of 13 helical transmembrane segments spans residues 4–24 (HTLI…PIAV), 26–46 (LGLG…PWAL), 54–74 (AILH…GLEL), 90–110 (GALQ…LLGL), 114–134 (VAEL…MQAM), 149–169 (FAVL…IPLL), 178–198 (LMAF…VVVL), 218–237 (VFSA…LEEV), 238–257 (GLSM…SSEY), 270–290 (GLLL…GTLV), 294–314 (LRIV…LWLI), 326–346 (RWFA…FGAA), and 359–379 (ALTL…VLLT). Residues 399 to 518 (QPRVIVAGFG…AGVEAPERET (120 aa)) enclose the RCK N-terminal domain. Residues 598–621 (GWQGTEEGRHTGDIADEPENKPSA) form a disordered region.

It belongs to the monovalent cation:proton antiporter 2 (CPA2) transporter (TC 2.A.37) family. KefC subfamily. As to quaternary structure, homodimer. Interacts with the regulatory subunit KefF.

It is found in the cell inner membrane. In terms of biological role, pore-forming subunit of a potassium efflux system that confers protection against electrophiles. Catalyzes K(+)/H(+) antiport. This is Glutathione-regulated potassium-efflux system protein KefC from Klebsiella pneumoniae subsp. pneumoniae (strain ATCC 700721 / MGH 78578).